Consider the following 117-residue polypeptide: Aspartate 1-decarboxylase (117 aa).

The active-site Schiff-base intermediate with substrate; via pyruvic acid is Ser25. Residue Ser25 is modified to Pyruvic acid (Ser). Thr57 serves as a coordination point for substrate. The active-site Proton donor is the Tyr58. 73 to 75 contacts substrate; that stretch reads GAA.

Belongs to the PanD family. Heterooctamer of four alpha and four beta subunits. Requires pyruvate as cofactor. Is synthesized initially as an inactive proenzyme, which is activated by self-cleavage at a specific serine bond to produce a beta-subunit with a hydroxyl group at its C-terminus and an alpha-subunit with a pyruvoyl group at its N-terminus.

Its subcellular location is the cytoplasm. It carries out the reaction L-aspartate + H(+) = beta-alanine + CO2. The protein operates within cofactor biosynthesis; (R)-pantothenate biosynthesis; beta-alanine from L-aspartate: step 1/1. In terms of biological role, catalyzes the pyruvoyl-dependent decarboxylation of aspartate to produce beta-alanine. The sequence is that of Aspartate 1-decarboxylase from Bacteroides fragilis (strain ATCC 25285 / DSM 2151 / CCUG 4856 / JCM 11019 / LMG 10263 / NCTC 9343 / Onslow / VPI 2553 / EN-2).